The chain runs to 510 residues: MICRSLLLLRSNAASKASSIVKHVAATGCLPEYSSEAPARYFSSESSLQVDSTEENGFKGHGMLAPFTAGWQSTDLHPLVIDRSEGSYVYDINGKKYIDALAGLWSTALGGNEPRLIKAATDQLNKLPFYHSFWNRTTKPSLDLANEILSMFTAREMGKIFFTNSGSEANDSQVKLVWYYNNALGRPNKKKFIARSKSYHGSTLVSASLSGLPALHQKFDLPAPFVLHTDCPHYWRFHLPDETEEEFATRLATNLENLILKEGPETIAAFIAEPVMGAGGVIPPPKTYFEKIQAVLKKYDILLIADEVITAFGRLGTMFGCDMYDIKPDLVSIAKALSSAYMPIGAILVSPEITDVIYSQSNKLGSFAHGFTYSGHPVSCAVAIEALKIYKERNIIEHVQKIAPRFQEGIKAFSGSPIVGEIRGLGLILGTEFVDNKSPNDPFPAEWGVGSLFGAECEKRGMLIRVAGDNIMLSPPLIMTPDEVEEIISKYGDALKATEERIAELKAKRG.

The N-terminal 41 residues, 1 to 41 (MICRSLLLLRSNAASKASSIVKHVAATGCLPEYSSEAPARY), are a transit peptide targeting the mitochondrion. Residue 166-167 (GS) participates in pyridoxal 5'-phosphate binding. Tyrosine 199 provides a ligand contact to substrate. Aspartate 306 is a binding site for pyridoxal 5'-phosphate. Lysine 335 lines the substrate pocket. Position 335 is an N6-(pyridoxal phosphate)lysine (lysine 335).

The protein belongs to the class-III pyridoxal-phosphate-dependent aminotransferase family.

Its subcellular location is the mitochondrion. The catalysed reaction is 4-aminobutanoate + pyruvate = succinate semialdehyde + L-alanine. The enzyme catalyses 4-aminobutanoate + glyoxylate = succinate semialdehyde + glycine. Transaminase that degrades gamma-amino butyric acid (GABA). The sequence is that of Probable gamma-aminobutyrate transaminase 3, mitochondrial from Oryza sativa subsp. indica (Rice).